A 235-amino-acid chain; its full sequence is MDSIRSIPTAIDVRQLGTVDYHIAWQLQRDLADARVAGGPDTLLLLQHPPVYTAGRRTQPHERPNPSLHGVPVVETDRGGKITWHGPGQLVGYPIIGLAEPLDVVNYVRRLEEALIKVCAELGLDTSRVNGRSGIWVPGSAGQPARKIAAIGVRVSRATTMHGFALNCQCDLDAFHAIVPCGISDAGVTSLSAELGRTVAVNDVRSAIAEAVNDALDGWLALSWLSTPASVTSTL.

The BPL/LPL catalytic domain maps to 37 to 220 (AGGPDTLLLL…AVNDALDGWL (184 aa)). Substrate is bound by residues 78–85 (RGGKITWH), 150–152 (AIG), and 163–165 (GFA). Cysteine 181 serves as the catalytic Acyl-thioester intermediate.

It belongs to the LipB family.

The protein resides in the cytoplasm. It carries out the reaction octanoyl-[ACP] + L-lysyl-[protein] = N(6)-octanoyl-L-lysyl-[protein] + holo-[ACP] + H(+). It functions in the pathway protein modification; protein lipoylation via endogenous pathway; protein N(6)-(lipoyl)lysine from octanoyl-[acyl-carrier-protein]: step 1/2. In terms of biological role, catalyzes the transfer of endogenously produced octanoic acid from octanoyl-acyl-carrier-protein onto the lipoyl domains of lipoate-dependent enzymes. Lipoyl-ACP can also act as a substrate although octanoyl-ACP is likely to be the physiological substrate. In Mycobacterium leprae (strain Br4923), this protein is Octanoyltransferase.